Here is a 102-residue protein sequence, read N- to C-terminus: Large ribosomal subunit protein bL21 (102 aa).

This sequence belongs to the bacterial ribosomal protein bL21 family. In terms of assembly, part of the 50S ribosomal subunit. Contacts protein L20.

This protein binds to 23S rRNA in the presence of protein L20. This Leifsonia xyli subsp. xyli (strain CTCB07) protein is Large ribosomal subunit protein bL21.